We begin with the raw amino-acid sequence, 288 residues long: Probable ketoamine kinase VV1_2562 (288 aa).

92-94 (NFL) lines the ATP pocket. D195 (proton acceptor) is an active-site residue.

This sequence belongs to the fructosamine kinase family.

Its function is as follows. Ketoamine kinase that phosphorylates ketoamines on the third carbon of the sugar moiety to generate ketoamine 3-phosphate. The chain is Probable ketoamine kinase VV1_2562 from Vibrio vulnificus (strain CMCP6).